Reading from the N-terminus, the 239-residue chain is LexA repressor (239 aa).

Positions 26 to 46 (FDEMKDALDLASKSGIHRLIT) form a DNA-binding region, H-T-H motif. Catalysis depends on for autocatalytic cleavage activity residues Ser-159 and Lys-197.

The protein belongs to the peptidase S24 family. In terms of assembly, homodimer.

It carries out the reaction Hydrolysis of Ala-|-Gly bond in repressor LexA.. Its function is as follows. Represses a number of genes involved in the response to DNA damage (SOS response), including recA and lexA. In the presence of single-stranded DNA, RecA interacts with LexA causing an autocatalytic cleavage which disrupts the DNA-binding part of LexA, leading to derepression of the SOS regulon and eventually DNA repair. The protein is LexA repressor of Allorhizobium ampelinum (strain ATCC BAA-846 / DSM 112012 / S4) (Agrobacterium vitis (strain S4)).